A 341-amino-acid polypeptide reads, in one-letter code: Glyceraldehyde-3-phosphate dehydrogenase 2 (341 aa).

NAD(+)-binding positions include 12 to 13, Arg-78, and Thr-120; that span reads RI. D-glyceraldehyde 3-phosphate-binding positions include 152-154 and Thr-183; that span reads SCT. The active-site Nucleophile is Cys-153. Position 184 (Asn-184) interacts with NAD(+). Residues Arg-198, 211-212, and Arg-234 contribute to the D-glyceraldehyde 3-phosphate site; that span reads TG. An NAD(+)-binding site is contributed by Asn-313.

It belongs to the glyceraldehyde-3-phosphate dehydrogenase family. In terms of assembly, homotetramer.

It localises to the cytoplasm. It catalyses the reaction D-glyceraldehyde 3-phosphate + phosphate + NAD(+) = (2R)-3-phospho-glyceroyl phosphate + NADH + H(+). It functions in the pathway carbohydrate degradation; glycolysis; pyruvate from D-glyceraldehyde 3-phosphate: step 1/5. Catalyzes the oxidative phosphorylation of glyceraldehyde 3-phosphate (G3P) to 1,3-bisphosphoglycerate (BPG) using the cofactor NAD. The first reaction step involves the formation of a hemiacetal intermediate between G3P and a cysteine residue, and this hemiacetal intermediate is then oxidized to a thioester, with concomitant reduction of NAD to NADH. The reduced NADH is then exchanged with the second NAD, and the thioester is attacked by a nucleophilic inorganic phosphate to produce BPG. This Staphylococcus epidermidis (strain ATCC 35984 / DSM 28319 / BCRC 17069 / CCUG 31568 / BM 3577 / RP62A) protein is Glyceraldehyde-3-phosphate dehydrogenase 2 (gapA2).